Here is a 162-residue protein sequence, read N- to C-terminus: RNA replication protein (162 aa).

Belongs to the potexvirus/carlavirus RNA replication protein family.

The catalysed reaction is RNA(n) + a ribonucleoside 5'-triphosphate = RNA(n+1) + diphosphate. The enzyme catalyses ATP + H2O = ADP + phosphate + H(+). Its function is as follows. RNA replication. The central part of this protein possibly functions as an ATP-binding helicase. The polypeptide is RNA replication protein (Lilium formosanum).